A 181-amino-acid polypeptide reads, in one-letter code: TATA-box-binding protein C (181 aa).

A run of 2 repeats spans residues isoleucine 5–leucine 83 and valine 99–valine 177.

It belongs to the TBP family.

Its function is as follows. General factor that plays a role in the activation of archaeal genes transcribed by RNA polymerase. Binds specifically to the TATA box promoter element which lies close to the position of transcription initiation. This is TATA-box-binding protein C (tbpC1) from Halobacterium salinarum (strain ATCC 700922 / JCM 11081 / NRC-1) (Halobacterium halobium).